The primary structure comprises 632 residues: Probable potassium transport system protein Kup 1 (632 aa).

Transmembrane regions (helical) follow at residues 17-37 (LFYL…TSPL), 60-80 (LISL…VLFL), 106-126 (TAIL…DAMI), 146-166 (LADY…VVQS), 175-195 (FFGP…ISHI), 210-230 (AVAF…AVFL), 254-274 (WFLL…ALVL), 292-312 (ALLP…QAVI), 344-364 (IFVP…VLGF), 370-390 (LATA…IMAF), 401-421 (LPVA…FLGA), and 426-446 (IHDG…VMWT).

Belongs to the HAK/KUP transporter (TC 2.A.72) family.

The protein resides in the cell inner membrane. It carries out the reaction K(+)(in) + H(+)(in) = K(+)(out) + H(+)(out). Functionally, transport of potassium into the cell. Likely operates as a K(+):H(+) symporter. The sequence is that of Probable potassium transport system protein Kup 1 from Rhizobium johnstonii (strain DSM 114642 / LMG 32736 / 3841) (Rhizobium leguminosarum bv. viciae).